We begin with the raw amino-acid sequence, 465 residues long: Argininosuccinate lyase (465 aa).

The protein belongs to the lyase 1 family. Argininosuccinate lyase subfamily.

It localises to the cytoplasm. The catalysed reaction is 2-(N(omega)-L-arginino)succinate = fumarate + L-arginine. Its pathway is amino-acid biosynthesis; L-arginine biosynthesis; L-arginine from L-ornithine and carbamoyl phosphate: step 3/3. The chain is Argininosuccinate lyase from Rhodopseudomonas palustris (strain BisB5).